The following is a 212-amino-acid chain: Cytidylate kinase (212 aa).

7 to 15 (GPAASGKGT) serves as a coordination point for ATP.

The protein belongs to the cytidylate kinase family. Type 1 subfamily.

It localises to the cytoplasm. The catalysed reaction is CMP + ATP = CDP + ADP. It carries out the reaction dCMP + ATP = dCDP + ADP. This is Cytidylate kinase from Nitrobacter winogradskyi (strain ATCC 25391 / DSM 10237 / CIP 104748 / NCIMB 11846 / Nb-255).